Consider the following 858-residue polypeptide: Elongation factor 2 (858 aa).

Residues Ala-17 to Val-362 form the tr-type G domain. GTP is bound at residue Ala-26–Ser-33. Phosphothreonine occurs at positions 57 and 59. GTP-binding positions include Asn-158–Asp-161 and Ser-216–Leu-218. A Diphthamide modification is found at His-715.

Belongs to the TRAFAC class translation factor GTPase superfamily. Classic translation factor GTPase family. EF-G/EF-2 subfamily. Binds to 80S ribosomes. Actively translating ribosomes show mutually exclusive binding of eIF5a (EIF5A or EIF5A2) and EEF2/eEF2. Interacts with SERBP1; interaction sequesters EEF2/eEF2 at the A-site of the ribosome, thereby blocking the interaction sites of the mRNA-tRNA complex, promoting ribosome stabilization and hibernation. Interacts with HABP4; interaction takes place at the A-site of hibernating ribosomes and promotes ribosome stabilization. In terms of processing, phosphorylation by EF-2 kinase completely inactivates EF-2. Diphthamide is 2-[3-carboxyamido-3-(trimethyl-ammonio)propyl]histidine.

It is found in the cytoplasm. The protein resides in the nucleus. The catalysed reaction is GTP + H2O = GDP + phosphate + H(+). Functionally, catalyzes the GTP-dependent ribosomal translocation step during translation elongation. During this step, the ribosome changes from the pre-translocational (PRE) to the post-translocational (POST) state as the newly formed A-site-bound peptidyl-tRNA and P-site-bound deacylated tRNA move to the P and E sites, respectively. Catalyzes the coordinated movement of the two tRNA molecules, the mRNA and conformational changes in the ribosome. The sequence is that of Elongation factor 2 (EEF2) from Gallus gallus (Chicken).